We begin with the raw amino-acid sequence, 152 residues long: Nucleoside diphosphate kinase A (152 aa).

ATP-binding residues include K12, F60, R88, and T94. A Glycyl lysine isopeptide (Lys-Gly) (interchain with G-Cter in ubiquitin) cross-link involves residue K100. The ATP site is built by R105 and N115. H118 serves as the catalytic Pros-phosphohistidine intermediate. A phosphoserine mark is found at S120, S122, and S125.

It belongs to the NDK family. Hexamer of two different chains: An and B (A6, A5B, A4B2, A3B3, A2B4, AB5, B6). Interacts with PRUNE1. Component of the SET complex, composed of at least ANP32A, APEX1, HMGB2, NME1, SET and TREX1. Within this complex, interacts directly with SET. Also interacts with TREX1, but only following translocation to the nucleus. Requires Mg(2+) as cofactor.

It is found in the cytoplasm. Its subcellular location is the nucleus. It catalyses the reaction a 2'-deoxyribonucleoside 5'-diphosphate + ATP = a 2'-deoxyribonucleoside 5'-triphosphate + ADP. The catalysed reaction is a ribonucleoside 5'-diphosphate + ATP = a ribonucleoside 5'-triphosphate + ADP. With respect to regulation, autophosphorylation at His-118 increases serine/threonine protein kinase activity of the enzyme. Interaction with the SET complex inhibits exonuclease activity. Functionally, major role in the synthesis of nucleoside triphosphates other than ATP. The ATP gamma phosphate is transferred to the NDP beta phosphate via a ping-pong mechanism, using a phosphorylated active-site intermediate. Possesses nucleoside-diphosphate kinase, serine/threonine-specific protein kinase, geranyl and farnesyl pyrophosphate kinase, histidine protein kinase and 3'-5' exonuclease activities. Involved in cell proliferation, differentiation and development, signal transduction, G protein-coupled receptor endocytosis, and gene expression. Required for neural development including neural patterning and cell fate determination. During GZMA-mediated cell death, works in concert with TREX1. NME1 nicks one strand of DNA and TREX1 removes bases from the free 3' end to enhance DNA damage and prevent DNA end reannealing and rapid repair. This chain is Nucleoside diphosphate kinase A (Nme1), found in Rattus norvegicus (Rat).